The primary structure comprises 375 residues: Prophage integrase IntE (375 aa).

The Core-binding (CB) domain occupies I82–Q167. The Tyr recombinase domain occupies I189–L375. Residues R226, K249, H330, R333, and H353 contribute to the active site. The segment at L350–L375 is disordered. Residue Y362 is the O-(3'-phospho-DNA)-tyrosine intermediate of the active site.

This sequence belongs to the 'phage' integrase family.

In terms of biological role, integrase from the cryptic lambdoid prophage e14. Integrase is necessary for integration of the phage into the host genome by site-specific recombination. In conjunction with excisionase, integrase is also necessary for excision of the prophage from the host genome. The sequence is that of Prophage integrase IntE (intE) from Escherichia coli (strain K12).